Here is a 743-residue protein sequence, read N- to C-terminus: Cap-specific mRNA (nucleoside-2'-O-)-methyltransferase 2 (743 aa).

The 214-residue stretch at glutamate 113–alanine 326 folds into the Adrift-type SAM-dependent 2'-O-MTase domain. Residue lysine 121 is part of the active site. S-adenosyl-L-methionine is bound by residues glycine 152, tryptophan 171, and aspartate 239. Aspartate 239 is a catalytic residue. Lysine 279 functions as the Proton acceptor in the catalytic mechanism.

The protein resides in the nucleus. The protein localises to the cytoplasm. The catalysed reaction is a 5'-end (N(7)-methyl 5'-triphosphoguanosine)-(2'-O-methyl-ribonucleoside)-(ribonucleotide) in mRNA + S-adenosyl-L-methionine = a 5'-end (N(7)-methyl 5'-triphosphoguanosine)-(2'-O-methyl-ribonucleoside)-(2'-O-methyl-ribonucleotide) in mRNA + S-adenosyl-L-homocysteine + H(+). S-adenosyl-L-methionine-dependent methyltransferase that mediates mRNA cap2 2'-O-ribose methylation to the 5'-cap structure of mRNAs. Methylates the ribose of the second nucleotide of a m(7)GpppG-capped mRNA and small nuclear RNA (snRNA) (cap0) to produce m(7)GpppRmpNm (cap2). The polypeptide is Cap-specific mRNA (nucleoside-2'-O-)-methyltransferase 2 (cmtr2) (Danio rerio (Zebrafish)).